A 426-amino-acid polypeptide reads, in one-letter code: Putative glutamate--cysteine ligase 2 (426 aa).

The protein belongs to the glutamate--cysteine ligase type 2 family. YbdK subfamily.

The catalysed reaction is L-cysteine + L-glutamate + ATP = gamma-L-glutamyl-L-cysteine + ADP + phosphate + H(+). Functionally, ATP-dependent carboxylate-amine ligase which exhibits weak glutamate--cysteine ligase activity. This Bradyrhizobium diazoefficiens (strain JCM 10833 / BCRC 13528 / IAM 13628 / NBRC 14792 / USDA 110) protein is Putative glutamate--cysteine ligase 2.